Here is a 777-residue protein sequence, read N- to C-terminus: Beta-hexosaminidase (777 aa).

A signal peptide spans Met1–Ala18. Cys19 is lipidated: N-palmitoyl cysteine. A lipid anchor (S-diacylglycerol cysteine) is attached at Cys19. Positions Ala625–Lys766 constitute a PA14 domain.

The protein belongs to the glycosyl hydrolase 20 family.

The protein localises to the cell outer membrane. The catalysed reaction is Hydrolysis of terminal non-reducing N-acetyl-D-hexosamine residues in N-acetyl-beta-D-hexosaminides.. The sequence is that of Beta-hexosaminidase (nahA) from Porphyromonas gingivalis (strain ATCC BAA-308 / W83).